The chain runs to 624 residues: Chaperone protein HtpG (624 aa).

Positions 1–336 (MKGQETRGFQ…SSDLPLNVSR (336 aa)) are a; substrate-binding. The interval 337–552 (EILQDSTVTR…ADEMSTQMAK (216 aa)) is b. Residues 553 to 624 (LFAAAGQKVP…IRRMNQLLVS (72 aa)) form a c region.

This sequence belongs to the heat shock protein 90 family. In terms of assembly, homodimer.

The protein resides in the cytoplasm. Molecular chaperone. Has ATPase activity. This chain is Chaperone protein HtpG, found in Escherichia coli O139:H28 (strain E24377A / ETEC).